The following is a 94-amino-acid chain: Integration host factor subunit beta (94 aa).

This sequence belongs to the bacterial histone-like protein family. As to quaternary structure, heterodimer of an alpha and a beta chain.

This protein is one of the two subunits of integration host factor, a specific DNA-binding protein that functions in genetic recombination as well as in transcriptional and translational control. The chain is Integration host factor subunit beta from Nitrosospira multiformis (strain ATCC 25196 / NCIMB 11849 / C 71).